The following is a 361-amino-acid chain: Cyclin-Y-like protein 2 (361 aa).

In terms of domain architecture, Cyclin N-terminal spans 204 to 286; it reads MRLTAEFAIV…QFLKLINYNN (83 aa).

This sequence belongs to the cyclin family. Cyclin Y subfamily.

The sequence is that of Cyclin-Y-like protein 2 (CCNYL2) from Homo sapiens (Human).